The following is a 195-amino-acid chain: Probable nicotinate-nucleotide adenylyltransferase (195 aa).

This sequence belongs to the NadD family.

The enzyme catalyses nicotinate beta-D-ribonucleotide + ATP + H(+) = deamido-NAD(+) + diphosphate. It participates in cofactor biosynthesis; NAD(+) biosynthesis; deamido-NAD(+) from nicotinate D-ribonucleotide: step 1/1. Functionally, catalyzes the reversible adenylation of nicotinate mononucleotide (NaMN) to nicotinic acid adenine dinucleotide (NaAD). The protein is Probable nicotinate-nucleotide adenylyltransferase of Salinibacter ruber (strain DSM 13855 / M31).